A 102-amino-acid polypeptide reads, in one-letter code: Protamine-2 (102 aa).

Phosphoserine occurs at positions 8, 10, and 37. Disordered regions lie at residues 15–41 (EVYG…PEQV) and 66–102 (IHRQ…CRRH).

This sequence belongs to the protamine P2 family. Interacts with TDRP. Post-translationally, proteolytic processing into mature chains is required for histone eviction during spermatogenesis. Transition proteins (TNP1 and TNP2) are required for processing. Testis.

The protein localises to the nucleus. It localises to the chromosome. Its function is as follows. Protamines substitute for histones in the chromatin of sperm during the haploid phase of spermatogenesis. They compact sperm DNA into a highly condensed, stable and inactive complex. The chain is Protamine-2 (PRM2) from Pongo pygmaeus (Bornean orangutan).